A 161-amino-acid polypeptide reads, in one-letter code: Phosphopantetheine adenylyltransferase (161 aa).

Thr-9 is a substrate binding site. ATP is bound by residues 9-10 (TF) and His-17. Positions 41, 73, and 87 each coordinate substrate. Residues 88–90 (GLR), Glu-98, and 123–129 (YSFISST) each bind ATP.

The protein belongs to the bacterial CoaD family. Homohexamer. It depends on Mg(2+) as a cofactor.

The protein resides in the cytoplasm. The catalysed reaction is (R)-4'-phosphopantetheine + ATP + H(+) = 3'-dephospho-CoA + diphosphate. It functions in the pathway cofactor biosynthesis; coenzyme A biosynthesis; CoA from (R)-pantothenate: step 4/5. Its function is as follows. Reversibly transfers an adenylyl group from ATP to 4'-phosphopantetheine, yielding dephospho-CoA (dPCoA) and pyrophosphate. The sequence is that of Phosphopantetheine adenylyltransferase from Pseudomonas putida (strain ATCC 47054 / DSM 6125 / CFBP 8728 / NCIMB 11950 / KT2440).